The sequence spans 457 residues: Bifunctional protein GlmU (457 aa).

Residues methionine 1 to arginine 229 are pyrophosphorylase. UDP-N-acetyl-alpha-D-glucosamine is bound by residues leucine 8–glycine 11, lysine 22, glutamine 72, and glycine 77–threonine 78. Aspartate 102 serves as a coordination point for Mg(2+). 4 residues coordinate UDP-N-acetyl-alpha-D-glucosamine: glycine 139, glutamate 154, asparagine 169, and asparagine 227. Asparagine 227 is a binding site for Mg(2+). Residues arginine 230–serine 250 are linker. The tract at residues glycine 251–valine 457 is N-acetyltransferase. UDP-N-acetyl-alpha-D-glucosamine-binding residues include arginine 332 and lysine 350. Catalysis depends on histidine 362, which acts as the Proton acceptor. Positions 365 and 376 each coordinate UDP-N-acetyl-alpha-D-glucosamine. Residues asparagine 385–tyrosine 386, serine 404, alanine 422, and arginine 439 contribute to the acetyl-CoA site.

In the N-terminal section; belongs to the N-acetylglucosamine-1-phosphate uridyltransferase family. It in the C-terminal section; belongs to the transferase hexapeptide repeat family. In terms of assembly, homotrimer. Mg(2+) is required as a cofactor.

The protein localises to the cytoplasm. The enzyme catalyses alpha-D-glucosamine 1-phosphate + acetyl-CoA = N-acetyl-alpha-D-glucosamine 1-phosphate + CoA + H(+). It catalyses the reaction N-acetyl-alpha-D-glucosamine 1-phosphate + UTP + H(+) = UDP-N-acetyl-alpha-D-glucosamine + diphosphate. It participates in nucleotide-sugar biosynthesis; UDP-N-acetyl-alpha-D-glucosamine biosynthesis; N-acetyl-alpha-D-glucosamine 1-phosphate from alpha-D-glucosamine 6-phosphate (route II): step 2/2. The protein operates within nucleotide-sugar biosynthesis; UDP-N-acetyl-alpha-D-glucosamine biosynthesis; UDP-N-acetyl-alpha-D-glucosamine from N-acetyl-alpha-D-glucosamine 1-phosphate: step 1/1. It functions in the pathway bacterial outer membrane biogenesis; LPS lipid A biosynthesis. Catalyzes the last two sequential reactions in the de novo biosynthetic pathway for UDP-N-acetylglucosamine (UDP-GlcNAc). The C-terminal domain catalyzes the transfer of acetyl group from acetyl coenzyme A to glucosamine-1-phosphate (GlcN-1-P) to produce N-acetylglucosamine-1-phosphate (GlcNAc-1-P), which is converted into UDP-GlcNAc by the transfer of uridine 5-monophosphate (from uridine 5-triphosphate), a reaction catalyzed by the N-terminal domain. The protein is Bifunctional protein GlmU of Pelotomaculum thermopropionicum (strain DSM 13744 / JCM 10971 / SI).